Here is a 163-residue protein sequence, read N- to C-terminus: Ribosome maturation factor RimP (163 aa).

It belongs to the RimP family.

Its subcellular location is the cytoplasm. Its function is as follows. Required for maturation of 30S ribosomal subunits. The sequence is that of Ribosome maturation factor RimP from Polynucleobacter necessarius subsp. necessarius (strain STIR1).